A 323-amino-acid polypeptide reads, in one-letter code: Aspartate carbamoyltransferase catalytic subunit (323 aa).

Positions 65 and 66 each coordinate carbamoyl phosphate. Lys-93 lines the L-aspartate pocket. Arg-115, His-149, and Gln-152 together coordinate carbamoyl phosphate. L-aspartate contacts are provided by Arg-182 and Arg-237. 2 residues coordinate carbamoyl phosphate: Gly-278 and Pro-279.

Belongs to the aspartate/ornithine carbamoyltransferase superfamily. ATCase family. As to quaternary structure, heterododecamer (2C3:3R2) of six catalytic PyrB chains organized as two trimers (C3), and six regulatory PyrI chains organized as three dimers (R2).

It carries out the reaction carbamoyl phosphate + L-aspartate = N-carbamoyl-L-aspartate + phosphate + H(+). Its pathway is pyrimidine metabolism; UMP biosynthesis via de novo pathway; (S)-dihydroorotate from bicarbonate: step 2/3. Functionally, catalyzes the condensation of carbamoyl phosphate and aspartate to form carbamoyl aspartate and inorganic phosphate, the committed step in the de novo pyrimidine nucleotide biosynthesis pathway. The chain is Aspartate carbamoyltransferase catalytic subunit from Aromatoleum aromaticum (strain DSM 19018 / LMG 30748 / EbN1) (Azoarcus sp. (strain EbN1)).